Consider the following 328-residue polypeptide: NADH-cytochrome b5 reductase-like protein (328 aa).

Residues 76–184 (DKWLEFKLQD…KGPVEKFKYS (109 aa)) enclose the FAD-binding FR-type domain. Thr-201 is subject to Phosphothreonine.

This sequence belongs to the flavoprotein pyridine nucleotide cytochrome reductase family. FAD is required as a cofactor.

The protein localises to the mitochondrion. It carries out the reaction 2 Fe(III)-[cytochrome b5] + NADH = 2 Fe(II)-[cytochrome b5] + NAD(+) + H(+). Functionally, desaturation and elongation of fatty acids. The polypeptide is NADH-cytochrome b5 reductase-like protein (CBR2) (Arabidopsis thaliana (Mouse-ear cress)).